Reading from the N-terminus, the 281-residue chain is Pseudouridine-5'-phosphate glycosidase (281 aa).

The Proton donor role is filled by E9. Substrate is bound by residues K69 and V89. D118 serves as a coordination point for Mn(2+). 120–122 (SAD) is a binding site for substrate. The Nucleophile role is filled by K139.

This sequence belongs to the pseudouridine-5'-phosphate glycosidase family. Homotrimer. The cofactor is Mn(2+).

It carries out the reaction D-ribose 5-phosphate + uracil = psi-UMP + H2O. Its function is as follows. Catalyzes the reversible cleavage of pseudouridine 5'-phosphate (PsiMP) to ribose 5-phosphate and uracil. Functions biologically in the cleavage direction, as part of a pseudouridine degradation pathway. The sequence is that of Pseudouridine-5'-phosphate glycosidase from Thermus thermophilus (strain ATCC BAA-163 / DSM 7039 / HB27).